Consider the following 226-residue polypeptide: Small ribosomal subunit protein uS3 (226 aa).

Residues I39–T109 enclose the KH type-2 domain.

Belongs to the universal ribosomal protein uS3 family. Part of the 30S ribosomal subunit. Forms a tight complex with proteins S10 and S14.

In terms of biological role, binds the lower part of the 30S subunit head. Binds mRNA in the 70S ribosome, positioning it for translation. The chain is Small ribosomal subunit protein uS3 from Mycoplasmopsis synoviae (strain 53) (Mycoplasma synoviae).